A 90-amino-acid chain; its full sequence is U7-theraphotoxin-Hhn1b (90 aa).

The signal sequence occupies residues 1 to 19 (MKTAIFTVVLALAVFAVLS). Positions 20-50 (FGWEANEKALSEEFTELIHEKEAASETEARE) are excised as a propeptide. Intrachain disulfides connect C51-C65, C58-C70, and C64-C81.

Belongs to the neurotoxin 10 (Hwtx-1) family. 13 (Hntx-13) subfamily. As to expression, expressed by the venom gland.

Its subcellular location is the secreted. Ion channel inhibitor. The polypeptide is U7-theraphotoxin-Hhn1b (Cyriopagopus hainanus (Chinese bird spider)).